A 662-amino-acid polypeptide reads, in one-letter code: Biosynthetic arginine decarboxylase (662 aa).

Lys126 carries the post-translational modification N6-(pyridoxal phosphate)lysine. Residue 308 to 318 (LNVGGGLGVDY) participates in substrate binding.

The protein belongs to the Orn/Lys/Arg decarboxylase class-II family. SpeA subfamily. Mg(2+) is required as a cofactor. The cofactor is pyridoxal 5'-phosphate.

It catalyses the reaction L-arginine + H(+) = agmatine + CO2. Catalyzes the biosynthesis of agmatine from arginine. The sequence is that of Biosynthetic arginine decarboxylase from Deinococcus radiodurans (strain ATCC 13939 / DSM 20539 / JCM 16871 / CCUG 27074 / LMG 4051 / NBRC 15346 / NCIMB 9279 / VKM B-1422 / R1).